A 764-amino-acid polypeptide reads, in one-letter code: Dehydrocurvularin biosynthesis regulator (764 aa).

The segment at residues 28 to 59 is a DNA-binding region (zn(2)-C6 fungal-type); the sequence is CWECKRRKMKCIFDPRITSTSCNGCRQRGSPC. 3 disordered regions span residues 73-94, 112-136, and 633-672; these read HGAN…SDDA, YRYL…ASTC, and FPTS…PALS. Over residues 77–88 the composition is skewed to polar residues; sequence DSASLDASTPIA. Positions 663–672 are enriched in polar residues; sequence HPNTPSPALS.

The protein localises to the nucleus. In terms of biological role, transcription factor involved in regulation of the dehydrocurvularin biosynthesis gene cluster. This is Dehydrocurvularin biosynthesis regulator from Alternaria cinerariae.